The chain runs to 176 residues: Large ribosomal subunit protein uL10 (176 aa).

The protein belongs to the universal ribosomal protein uL10 family. In terms of assembly, part of the ribosomal stalk of the 50S ribosomal subunit. The N-terminus interacts with L11 and the large rRNA to form the base of the stalk. The C-terminus forms an elongated spine to which L12 dimers bind in a sequential fashion forming a multimeric L10(L12)X complex.

Its function is as follows. Forms part of the ribosomal stalk, playing a central role in the interaction of the ribosome with GTP-bound translation factors. The polypeptide is Large ribosomal subunit protein uL10 (rplJ) (Streptomyces antibioticus).